We begin with the raw amino-acid sequence, 542 residues long: Nibrin homolog (542 aa).

The 66-residue stretch at Y25–G90 folds into the FHA domain. The BRCT domain occupies I119 to M195. Positions S409–D430 are disordered. Residues V465–V500 are involved in MRE11-binding.

The protein belongs to the Nibrin family. Component of the MRN complex composed of two heterodimers RAD50 and MRE11 associated with a single NBS1.

The protein resides in the nucleus. It is found in the chromosome. Functionally, component of the MRN complex, which plays a central role in double-strand break (DSB) repair, DNA recombination, maintenance of telomere integrity and meiosis. The MRN complex is involved in the repair of DNA double-strand breaks (DSBs) via homologous recombination (HR), an error-free mechanism which primarily occurs during S and G2 phases. The complex (1) mediates the end resection of damaged DNA, which generates proper single-stranded DNA, a key initial steps in HR, and is (2) required for the recruitment of other repair factors and efficient activation of ATM and ATR upon DNA damage. The MRN complex possesses single-strand endonuclease activity and double-strand-specific 3'-5' exonuclease activity, which are provided by MRE11, to initiate end resection, which is required for single-strand invasion and recombination. Within the MRN complex, NBS1 acts as a protein-protein adapter, which specifically recognizes and binds phosphorylated proteins, promoting their recruitment to DNA damage sites. Recruits MRE11 and RAD50 components of the MRN complex to DSBs in response to DNA damage. This is Nibrin homolog from Arabidopsis thaliana (Mouse-ear cress).